We begin with the raw amino-acid sequence, 26 residues long: Halocyntin (26 aa).

In terms of biological role, has strong antibacterial activity against the Gram-positive bacteria M.luteus, S.aureus, B.megaterium, A.viridans and E.faecalis, and against the Gram-negative bacterium K.pneumoniae. Has less potent antibacterial activity against the Gram-negative bacteria E.coli DH5alpha, S.typhimurium, P.aeruginosa, E.aerogenes and N.gonorrhoeae. Has moderate hemolytic activity against sheep erythrocytes. The sequence is that of Halocyntin from Halocynthia papillosa (Red sea-squirt).